Reading from the N-terminus, the 207-residue chain is Guanylate kinase (207 aa).

Residues 4-184 form the Guanylate kinase-like domain; that stretch reads GTLYIVSAPS…ALSDLKTIIR (181 aa). 11–18 is an ATP binding site; sequence APSGAGKS.

This sequence belongs to the guanylate kinase family.

The protein localises to the cytoplasm. The enzyme catalyses GMP + ATP = GDP + ADP. In terms of biological role, essential for recycling GMP and indirectly, cGMP. In Salmonella paratyphi A (strain ATCC 9150 / SARB42), this protein is Guanylate kinase.